A 326-amino-acid chain; its full sequence is Probable magnesium transporter NIPA7 (326 aa).

Topologically, residues 1–4 are extracellular; sequence MVSD. A helical membrane pass occupies residues 5–25; the sequence is NEMGLVLAVSSSVFIGSSFIL. Topologically, residues 26–51 are cytoplasmic; the sequence is KKKGLKRAAANGTRAGFGGYTYLLEP. The chain crosses the membrane as a helical span at residues 52-72; sequence LWWVGLVTMTFGEIANFVAYV. Residues 73-76 lie on the Extracellular side of the membrane; the sequence is YAPA. The helical transmembrane segment at 77 to 97 threads the bilayer; the sequence is VLVTPLGALSIIISAVLAHFL. The Cytoplasmic segment spans residues 98–104; it reads LDEKLRK. A helical transmembrane segment spans residues 105–125; it reads MGVWGCVCCIVGSVMIVIHAP. Over 126–142 the chain is Extracellular; sequence QEQTPNSVEEIWKLAMQ. The chain crosses the membrane as a helical span at residues 143–163; sequence PAFLIYVAISMSIVLALILYC. Residues 164–169 lie on the Cytoplasmic side of the membrane; that stretch reads EPLCGQ. Residues 170-190 traverse the membrane as a helical segment; that stretch reads TNILVYIGICSLMGSLTVMSI. Residues 191–209 lie on the Extracellular side of the membrane; sequence KAVGIAIKLTFEGINQIWY. The chain crosses the membrane as a helical span at residues 210 to 230; that stretch reads PETWFFAMVAAICVVMQMIYL. Residues 231–240 lie on the Cytoplasmic side of the membrane; the sequence is NKALDTFNAA. A helical transmembrane segment spans residues 241–261; it reads IVSPIYYVMFTTLTIVASAIM. Residues 262–272 lie on the Extracellular side of the membrane; the sequence is FKDWNGQNTDS. Residues 273–293 traverse the membrane as a helical segment; the sequence is IASEICGFITVLTGTVILHST. The Cytoplasmic segment spans residues 294–326; it reads REEEQASPRRMRWQDSGKSFDEEHLTSLYSPEY.

Belongs to the NIPA (TC 2.A.7) family. As to quaternary structure, homodimer.

Its subcellular location is the cell membrane. It is found in the early endosome. Acts as a Mg(2+) transporter. Can also transport other divalent cations such as Fe(2+), Sr(2+), Ba(2+), Mn(2+) and Co(2+) but to a much less extent than Mg(2+). This chain is Probable magnesium transporter NIPA7, found in Arabidopsis thaliana (Mouse-ear cress).